The chain runs to 167 residues: uncharacterized protein (167 aa).

Positions 1-148 constitute an N-acetyltransferase domain; that stretch reads MLIRVEIPID…SAFQVHRLAD (148 aa).

The protein belongs to the acetyltransferase family.

This is an uncharacterized protein from Escherichia coli O157:H7.